A 563-amino-acid polypeptide reads, in one-letter code: Src substrate protein p85 (563 aa).

Cortactin repeat units lie at residues alanine 89–aspartate 125, serine 126–aspartate 162, tyrosine 163–aspartate 199, tyrosine 200–aspartate 236, tyrosine 237–aspartate 273, and tyrosine 274–aspartate 310. A Cortactin 7; truncated repeat occupies tyrosine 311–phenylalanine 333. Residues alanine 331–tyrosine 477 form a disordered region. Residues valine 349–threonine 410 are a coiled coil. Basic and acidic residues predominate over residues leucine 366–lysine 405. Positions glutamate 505–glutamine 563 constitute an SH3 domain.

Acetylated. Post-translationally, in normal cells, appears to be phosphorylated on serine and threonine; in cells expressing activated forms of pp60-src, they become heavily phosphorylated on tyrosine in vitro. Tyrosine phosphorylation in transformed cells may contribute to cellular growth regulation and transformation.

The protein resides in the cytoplasm. Its subcellular location is the cytoskeleton. It localises to the cell projection. It is found in the lamellipodium. The protein localises to the ruffle. The protein resides in the dendrite. Its subcellular location is the cell membrane. It localises to the podosome. It is found in the cell junction. The protein localises to the focal adhesion. The protein resides in the membrane. Its subcellular location is the clathrin-coated pit. It localises to the dendritic spine. It is found in the cell cortex. The protein localises to the endoplasmic reticulum. In terms of biological role, contributes to the organization of the actin cytoskeleton and cell shape. Plays a role in the formation of lamellipodia and in cell migration. Plays a role in the regulation of neuron morphology, axon growth and formation of neuronal growth cones, and may play a role in the regulation of neuronal spine density. Plays a role in focal adhesion assembly and turnover. Plays a role in intracellular protein transport and endocytosis, and in modulating the levels of potassium channels present at the cell membrane. Plays a role in endocytosis via clathrin-coated pits. The protein is Src substrate protein p85 (CTTN1) of Gallus gallus (Chicken).